The following is a 473-amino-acid chain: Aspartyl/glutamyl-tRNA(Asn/Gln) amidotransferase subunit B (473 aa).

It belongs to the GatB/GatE family. GatB subfamily. Heterotrimer of A, B and C subunits.

The catalysed reaction is L-glutamyl-tRNA(Gln) + L-glutamine + ATP + H2O = L-glutaminyl-tRNA(Gln) + L-glutamate + ADP + phosphate + H(+). It catalyses the reaction L-aspartyl-tRNA(Asn) + L-glutamine + ATP + H2O = L-asparaginyl-tRNA(Asn) + L-glutamate + ADP + phosphate + 2 H(+). Allows the formation of correctly charged Asn-tRNA(Asn) or Gln-tRNA(Gln) through the transamidation of misacylated Asp-tRNA(Asn) or Glu-tRNA(Gln) in organisms which lack either or both of asparaginyl-tRNA or glutaminyl-tRNA synthetases. The reaction takes place in the presence of glutamine and ATP through an activated phospho-Asp-tRNA(Asn) or phospho-Glu-tRNA(Gln). This is Aspartyl/glutamyl-tRNA(Asn/Gln) amidotransferase subunit B from Finegoldia magna (strain ATCC 29328 / DSM 20472 / WAL 2508) (Peptostreptococcus magnus).